The following is a 777-amino-acid chain: Proton-coupled zinc antiporter SLC30A5 (777 aa).

The Cytoplasmic segment spans residues 1 to 28 (MEEKYSSNVMSSGRLGPVDAPESRLTRY). A helical membrane pass occupies residues 29–49 (IVLLCFTKFLKALGIFESYDL). Topologically, residues 50 to 52 (LKV) are lumenal. Residues 53–73 (VHIVQFIFILKLGSTCFMVLF) traverse the membrane as a helical segment. The Cytoplasmic segment spans residues 74 to 94 (QKPFSSGKSITKRQWVSIVKH). The chain crosses the membrane as a helical span at residues 95–115 (AFVSCIISLLWFFGLTLCGPL). The Lumenal portion of the chain corresponds to 116 to 117 (RT). The chain crosses the membrane as a helical span at residues 118 to 138 (LLLFEHSDIVVISLLTVLFTG). The Cytoplasmic portion of the chain corresponds to 139–148 (SGGGPSKTRG). A helical membrane pass occupies residues 149 to 169 (AAFFIIAVICLLLFDNDDLMA). The Lumenal segment spans residues 170 to 189 (KIAEHPEGHHDSALTHFLYR). The helical transmembrane segment at 190–210 (AFFLLGVADHKGGVLLLVLAL) threads the bilayer. The Cytoplasmic portion of the chain corresponds to 211–234 (CFNVGFHTASRKLSLDIGGAKRLQ). Residues 235-255 (ALSHLVSVIILSPWVIILSAT) traverse the membrane as a helical segment. Topologically, residues 256-263 (TESKIESW) are lumenal. A helical transmembrane segment spans residues 264–284 (SALIMPFMTVIFSVMIMDFYV). The Cytoplasmic portion of the chain corresponds to 285 to 299 (ESVCSVKMEPSKCAR). Residues 300-320 (YGSFLIFASALLLGNFWTHPI) traverse the membrane as a helical segment. Residues 321–338 (TDQLRAMNKPAHQLHTEH) lie on the Lumenal side of the membrane. Residues 339–359 (VLSGGVVVSAIFFILSAQILA) form a helical membrane-spanning segment. Over 360 to 414 (SSSRKGQRGTLVGYSPEGTPLYNFMGDALHNTSPSMPRFLKDSLKQILEEYDSRQ) the chain is Cytoplasmic. The helical transmembrane segment at 415–435 (IFYFLCLNLAFTFVEIFYGVW) threads the bilayer. The Lumenal segment spans residues 436–444 (TNSLGLLSD). Residues 445-465 (GFHMLFDCSALVMGLIAALMT) form a helical membrane-spanning segment. Zn(2+) is bound by residues His447 and Asp451. Topologically, residues 466–484 (RWKATRIFSYGYGRVEILS) are cytoplasmic. The helical transmembrane segment at 485–505 (GFINGLFLVVIAFFVFIEAVA) threads the bilayer. Residues 506–516 (RIYDPPDINTD) are Lumenal-facing. A helical transmembrane segment spans residues 517–537 (MLTPVSVGGLIVNLVGICAFS). A his-rich loop; required for zinc transport region spans residues 538–586 (HAHSHGAARGGCPSHDHGHSHHGHGHSHGHNHGHSHSDHGHNHGHTHNH). Topologically, residues 538–604 (HAHSHGAARG…VGMNANMRGV (67 aa)) are cytoplasmic. The segment at 547-593 (GGCPSHDHGHSHHGHGHSHGHNHGHSHSDHGHNHGHTHNHGHSHGSA) is disordered. Basic residues-rich tracts occupy residues 555 to 571 (GHSH…NHGH) and 579 to 589 (NHGHTHNHGHS). Residues 605 to 625 (FSHVLADTLGSVGVIVSTILI) form a helical membrane-spanning segment. Zn(2+) contacts are provided by His607 and Asp611. Topologically, residues 626–629 (RQFG) are lumenal. A helical membrane pass occupies residues 630–650 (WLIADPLCSLFIAVLIFGSVL). The Cytoplasmic portion of the chain corresponds to 651–777 (PLLKDACQVI…KYYKDGTYIM (127 aa)).

This sequence belongs to the cation diffusion facilitator (CDF) transporter (TC 2.A.4) family. SLC30A subfamily. Heterodimer with SLC30A6/ZNT6; form a functional zinc ion transmembrane transporter.

The protein resides in the golgi apparatus. It localises to the golgi stack membrane. The protein localises to the cytoplasmic vesicle. It is found in the COPII-coated vesicle membrane. Its subcellular location is the secretory vesicle membrane. The protein resides in the trans-Golgi network membrane. It catalyses the reaction Zn(2+)(in) + 2 H(+)(out) = Zn(2+)(out) + 2 H(+)(in). In terms of biological role, together with SLC30A6 forms a functional proton-coupled zinc ion antiporter mediating zinc entry into the lumen of organelles along the secretory pathway. By contributing to zinc ion homeostasis within the early secretory pathway, regulates the activation and folding of enzymes like alkaline phosphatases and enzymes involved in phosphatidylinositol glycan anchor biosynthesis. The polypeptide is Proton-coupled zinc antiporter SLC30A5 (slc30a5) (Xenopus tropicalis (Western clawed frog)).